The sequence spans 318 residues: ADP-L-glycero-D-manno-heptose-6-epimerase (318 aa).

NADP(+) is bound by residues 10–11 (FI), 31–32 (DD), Lys-38, Lys-53, and 79–83 (EGACS). The active-site Proton acceptor is the Tyr-144. Lys-148 is a binding site for NADP(+). Position 173 (Asn-173) interacts with substrate. 2 residues coordinate NADP(+): Val-174 and Lys-182. Lys-182 (proton acceptor) is an active-site residue. Substrate contacts are provided by residues Ser-184, His-191, 205–208 (FEGC), Arg-218, and Tyr-282.

The protein belongs to the NAD(P)-dependent epimerase/dehydratase family. HldD subfamily. As to quaternary structure, homopentamer. NADP(+) serves as cofactor.

It catalyses the reaction ADP-D-glycero-beta-D-manno-heptose = ADP-L-glycero-beta-D-manno-heptose. It participates in nucleotide-sugar biosynthesis; ADP-L-glycero-beta-D-manno-heptose biosynthesis; ADP-L-glycero-beta-D-manno-heptose from D-glycero-beta-D-manno-heptose 7-phosphate: step 4/4. Catalyzes the interconversion between ADP-D-glycero-beta-D-manno-heptose and ADP-L-glycero-beta-D-manno-heptose via an epimerization at carbon 6 of the heptose. The chain is ADP-L-glycero-D-manno-heptose-6-epimerase from Aeromonas hydrophila subsp. hydrophila (strain ATCC 7966 / DSM 30187 / BCRC 13018 / CCUG 14551 / JCM 1027 / KCTC 2358 / NCIMB 9240 / NCTC 8049).